The chain runs to 97 residues: Protein S100-A10 (97 aa).

4 positions are modified to N6-acetyllysine: K23, K28, K54, and K57. The region spanning 47-82 (KDPLAVDKIMKDLDQCRDGKVGFQSFLSLVAGLTIA) is the EF-hand domain. Residues 60-71 (DQCRDGKVGFQS) are ancestral calcium site.

This sequence belongs to the S-100 family. As to quaternary structure, heterotetramer containing 2 light chains of S100A10/p11 and 2 heavy chains of ANXA2/p36. Interacts with SCN10A. Interacts with TASOR.

Its function is as follows. Because S100A10 induces the dimerization of ANXA2/p36, it may function as a regulator of protein phosphorylation in that the ANXA2 monomer is the preferred target (in vitro) of tyrosine-specific kinase. This is Protein S100-A10 (S100a10) from Mus musculus (Mouse).